A 90-amino-acid polypeptide reads, in one-letter code: MSRTVFCVLLNKEADGLDFQLYPGELGKRIFDNISKEAWGQWQHKQTMLINEKKLNMMDPEHRKMLETEMEGFLFDGKDVVIDGYTPPSK.

This sequence belongs to the Fe(2+)-trafficking protein family.

Its function is as follows. Could be a mediator in iron transactions between iron acquisition and iron-requiring processes, such as synthesis and/or repair of Fe-S clusters in biosynthetic enzymes. The sequence is that of Probable Fe(2+)-trafficking protein from Aliivibrio salmonicida (strain LFI1238) (Vibrio salmonicida (strain LFI1238)).